Here is a 165-residue protein sequence, read N- to C-terminus: Large ribosomal subunit protein uL5 (165 aa).

Belongs to the universal ribosomal protein uL5 family. In terms of assembly, part of the 50S ribosomal subunit; contacts the 5S rRNA and probably tRNA. Forms a bridge to the 30S subunit in the 70S ribosome.

This is one of the proteins that bind and probably mediate the attachment of the 5S RNA into the large ribosomal subunit, where it forms part of the central protuberance. In the 70S ribosome it contacts protein S13 of the 30S subunit (bridge B1b), connecting the 2 subunits; this bridge is implicated in subunit movement. May contact the P site tRNA; the 5S rRNA and some of its associated proteins might help stabilize positioning of ribosome-bound tRNAs. The protein is Large ribosomal subunit protein uL5 of Methanosarcina acetivorans (strain ATCC 35395 / DSM 2834 / JCM 12185 / C2A).